The following is a 209-amino-acid chain: Cytidylyl-2-hydroxypropylphosphonate hydrolase (209 aa).

Residues asparagine 111, aspartate 127, glutamate 129, and aspartate 131 each coordinate a divalent metal cation. Lysine 144 (proton donor) is an active-site residue. Aspartate 145 contributes to the a divalent metal cation binding site.

It belongs to the FomD family. As to quaternary structure, monomer in solution. The cofactor is Mn(2+). It depends on Co(2+) as a cofactor.

The enzyme catalyses cytidine 5'-({hydroxy[(S)-2-hydroxypropyl]phosphonoyl}phosphate) + H2O = (S)-2-hydroxypropylphosphonate + CMP + H(+). The protein operates within antibiotic biosynthesis; fosfomycin biosynthesis. With respect to regulation, hydrolysis of (S)-HPP-CMP is inhibited by CDP. Involved in fosfomycin biosynthesis. Catalyzes the hydrolysis of cytidylyl (S)-2-hydroxypropylphosphonate ((S)-HPP-CMP) to give (S)-2-hydroxypropylphosphonate ((S)-HPP) and CMP. Can also hydrolyze (R)-HPP-CMP and cytidylyl 2-hydroxyethylphosphonate (HEP-CMP), which is a biosynthetic intermediate before C-methylation, but the catalytic efficiency is much higher with (S)-HPP-CMP. This Streptomyces wedmorensis protein is Cytidylyl-2-hydroxypropylphosphonate hydrolase.